A 305-amino-acid polypeptide reads, in one-letter code: UDP-3-O-acyl-N-acetylglucosamine deacetylase (305 aa).

Zn(2+)-binding residues include H78, H237, and D241. The Proton donor role is filled by H264.

Belongs to the LpxC family. Zn(2+) is required as a cofactor.

The catalysed reaction is a UDP-3-O-[(3R)-3-hydroxyacyl]-N-acetyl-alpha-D-glucosamine + H2O = a UDP-3-O-[(3R)-3-hydroxyacyl]-alpha-D-glucosamine + acetate. It participates in glycolipid biosynthesis; lipid IV(A) biosynthesis; lipid IV(A) from (3R)-3-hydroxytetradecanoyl-[acyl-carrier-protein] and UDP-N-acetyl-alpha-D-glucosamine: step 2/6. In terms of biological role, catalyzes the hydrolysis of UDP-3-O-myristoyl-N-acetylglucosamine to form UDP-3-O-myristoylglucosamine and acetate, the committed step in lipid A biosynthesis. The sequence is that of UDP-3-O-acyl-N-acetylglucosamine deacetylase from Cupriavidus necator (strain ATCC 17699 / DSM 428 / KCTC 22496 / NCIMB 10442 / H16 / Stanier 337) (Ralstonia eutropha).